The following is a 95-amino-acid chain: Putative per-hexamer repeat protein 4 (95 aa).

This is Putative per-hexamer repeat protein 4 (Phxr4) from Mus musculus (Mouse).